Here is a 492-residue protein sequence, read N- to C-terminus: Katanin p60 ATPase-containing subunit A1 (492 aa).

Residues 91–158 (PAHDGEVWSL…MKPVRAREKK (68 aa)) form a disordered region. Positions 138–147 (LPSSKNTNNV) are enriched in polar residues. Residue 250-257 (GPPGTGKT) coordinates ATP.

This sequence belongs to the AAA ATPase family. Katanin p60 subunit A1 subfamily. Can homooligomerize into hexameric rings, which may be promoted by interaction with microtubules. Interacts with katnb1, which may serve as a targeting subunit.

It localises to the cytoplasm. The protein localises to the cytoskeleton. The protein resides in the microtubule organizing center. It is found in the centrosome. Its subcellular location is the spindle pole. It localises to the spindle. It carries out the reaction n ATP + n H2O + a microtubule = n ADP + n phosphate + (n+1) alpha/beta tubulin heterodimers.. ATPase activity is stimulated by microtubules, which promote homooligomerization. ATP-dependent microtubule severing is stimulated by interaction with katnb1. Its function is as follows. Catalytic subunit of a complex which severs microtubules in an ATP-dependent manner. Microtubule severing may promote rapid reorganization of cellular microtubule arrays and the release of microtubules from the centrosome following nucleation. This Xenopus tropicalis (Western clawed frog) protein is Katanin p60 ATPase-containing subunit A1 (katna1).